A 122-amino-acid polypeptide reads, in one-letter code: Large ribosomal subunit protein uL14 (122 aa).

The protein belongs to the universal ribosomal protein uL14 family. In terms of assembly, part of the 50S ribosomal subunit. Forms a cluster with proteins L3 and L19. In the 70S ribosome, L14 and L19 interact and together make contacts with the 16S rRNA in bridges B5 and B8.

Functionally, binds to 23S rRNA. Forms part of two intersubunit bridges in the 70S ribosome. This Bacillus licheniformis (strain ATCC 14580 / DSM 13 / JCM 2505 / CCUG 7422 / NBRC 12200 / NCIMB 9375 / NCTC 10341 / NRRL NRS-1264 / Gibson 46) protein is Large ribosomal subunit protein uL14.